A 119-amino-acid chain; its full sequence is NADH-quinone oxidoreductase subunit A (119 aa).

3 helical membrane passes run 7–27 (FPVL…MTIG), 63–83 (LIAI…PWGV), and 88–108 (IGWP…VGFV).

The protein belongs to the complex I subunit 3 family. As to quaternary structure, NDH-1 is composed of 14 different subunits. Subunits NuoA, H, J, K, L, M, N constitute the membrane sector of the complex.

It is found in the cell inner membrane. It catalyses the reaction a quinone + NADH + 5 H(+)(in) = a quinol + NAD(+) + 4 H(+)(out). Its function is as follows. NDH-1 shuttles electrons from NADH, via FMN and iron-sulfur (Fe-S) centers, to quinones in the respiratory chain. The immediate electron acceptor for the enzyme in this species is believed to be ubiquinone. Couples the redox reaction to proton translocation (for every two electrons transferred, four hydrogen ions are translocated across the cytoplasmic membrane), and thus conserves the redox energy in a proton gradient. This Ralstonia nicotianae (strain ATCC BAA-1114 / GMI1000) (Ralstonia solanacearum) protein is NADH-quinone oxidoreductase subunit A.